Consider the following 619-residue polypeptide: Guanylate cyclase soluble subunit beta-1 (619 aa).

Heme is bound at residue His105. Residues 421–554 (TILFSGIVGF…NTVNLTSRTE (134 aa)) enclose the Guanylate cyclase domain.

The protein belongs to the adenylyl cyclase class-4/guanylyl cyclase family. The active enzyme is formed by a heterodimer of an alpha and a beta subunit. Homotetramer; dimer of dimers (in vitro). Heterodimer with GUCY1A1. Can also form inactive homodimers in vitro. Heme is required as a cofactor. As to expression, lung and brain.

The protein localises to the cytoplasm. It catalyses the reaction GTP = 3',5'-cyclic GMP + diphosphate. With respect to regulation, activated by nitric oxide in the presence of magnesium or manganese ions. Mediates responses to nitric oxide (NO) by catalyzing the biosynthesis of the signaling molecule cGMP. In Rattus norvegicus (Rat), this protein is Guanylate cyclase soluble subunit beta-1 (Gucy1b1).